Reading from the N-terminus, the 326-residue chain is Tagatose 1,6-diphosphate aldolase (326 aa).

The protein belongs to the aldolase LacD family.

The enzyme catalyses D-tagatofuranose 1,6-bisphosphate = D-glyceraldehyde 3-phosphate + dihydroxyacetone phosphate. The protein operates within carbohydrate metabolism; D-tagatose 6-phosphate degradation; D-glyceraldehyde 3-phosphate and glycerone phosphate from D-tagatose 6-phosphate: step 2/2. In Staphylococcus aureus (strain MSSA476), this protein is Tagatose 1,6-diphosphate aldolase.